The sequence spans 254 residues: MQWQDEAIILGVKRHGETSVIAEVMTPSRGRHLGMVRSGRSRTMQPVLQAGNRVDVIWRARLHDHLGEFRIEPLQLRAGQLMETATAVYGVQAMGALLRLLPERDPHPHLYQALDVILDNLHDPVDAGELFVRFELAVLNDLGFGLDLSECAATGLRSDLIYVSPKTGRAVCRTAGAPYAARMLALPAFLGEGQSKAADPESLAAAFRLTDHFLHRHVYDPRGLNENAARDGFVQAALKALERKAEPPALDKAV.

It belongs to the RecO family.

Its function is as follows. Involved in DNA repair and RecF pathway recombination. This chain is DNA repair protein RecO, found in Agrobacterium fabrum (strain C58 / ATCC 33970) (Agrobacterium tumefaciens (strain C58)).